A 1280-amino-acid chain; its full sequence is E3 ubiquitin-protein ligase RKP (1280 aa).

The 188-residue stretch at 82–269 (KLHGDLDVSV…CELNFGAYPF (188 aa)) folds into the B30.2/SPRY domain. Residues 551 to 571 (SVLVSLFSVILHFLSEGFAML) form a helical membrane-spanning segment. The interval 669 to 719 (DRGKNTAQSSRGRCSSIPERSSHVAAECSAGSFSEEIDDKPSTSNQSDPDF) is disordered. The helical transmembrane segment at 834–854 (ALCMWVVQLLLVLSKMDSVFV) threads the bilayer. The RING-type zinc finger occupies 1217–1252 (CCICYAGEANAMIAPCSHRSCYGCITRHLLNCQRCF).

The protein resides in the membrane. The enzyme catalyses S-ubiquitinyl-[E2 ubiquitin-conjugating enzyme]-L-cysteine + [acceptor protein]-L-lysine = [E2 ubiquitin-conjugating enzyme]-L-cysteine + N(6)-ubiquitinyl-[acceptor protein]-L-lysine.. E3 ubiquitin-protein ligase that promotes the ubiquitination and proteasomal degradation of KRP1 and KRP2. The sequence is that of E3 ubiquitin-protein ligase RKP (RKP) from Arabidopsis thaliana (Mouse-ear cress).